The sequence spans 260 residues: ATP synthase subunit a (260 aa).

The next 5 membrane-spanning stretches (helical) occupy residues 27 to 47 (FWTV…LFIW), 90 to 110 (IAPL…MDLI), 132 to 154 (SADV…YYSI), 208 to 228 (LIFI…LSVP), and 230 to 250 (AIFH…LTIV).

Belongs to the ATPase A chain family. As to quaternary structure, F-type ATPases have 2 components, CF(1) - the catalytic core - and CF(0) - the membrane proton channel. CF(1) has five subunits: alpha(3), beta(3), gamma(1), delta(1), epsilon(1). CF(0) has three main subunits: a(1), b(2) and c(9-12). The alpha and beta chains form an alternating ring which encloses part of the gamma chain. CF(1) is attached to CF(0) by a central stalk formed by the gamma and epsilon chains, while a peripheral stalk is formed by the delta and b chains.

The protein localises to the cell inner membrane. Key component of the proton channel; it plays a direct role in the translocation of protons across the membrane. In Aeromonas hydrophila subsp. hydrophila (strain ATCC 7966 / DSM 30187 / BCRC 13018 / CCUG 14551 / JCM 1027 / KCTC 2358 / NCIMB 9240 / NCTC 8049), this protein is ATP synthase subunit a.